A 220-amino-acid chain; its full sequence is Ribonuclease HII (220 aa).

Residues K32–C220 form the RNase H type-2 domain. Residues D38, E39, and D130 each contribute to the a divalent metal cation site.

The protein belongs to the RNase HII family. Requires Mn(2+) as cofactor. It depends on Mg(2+) as a cofactor.

The protein resides in the cytoplasm. The catalysed reaction is Endonucleolytic cleavage to 5'-phosphomonoester.. Functionally, endonuclease that specifically degrades the RNA of RNA-DNA hybrids. This Brucella ovis (strain ATCC 25840 / 63/290 / NCTC 10512) protein is Ribonuclease HII.